Here is a 228-residue protein sequence, read N- to C-terminus: NAD(P)H-hydrate epimerase (228 aa).

One can recognise a YjeF N-terminal domain in the interval 9-209 (VRAVERLAHR…LLGLTPAFLA (201 aa)). 53–57 (NNGGD) is a (6S)-NADPHX binding site. Asn-54 and Asp-115 together coordinate K(+). (6S)-NADPHX contacts are provided by residues 119–125 (GIGLARP) and Asp-148. Ser-151 contributes to the K(+) binding site.

The protein belongs to the NnrE/AIBP family. K(+) serves as cofactor.

The catalysed reaction is (6R)-NADHX = (6S)-NADHX. It catalyses the reaction (6R)-NADPHX = (6S)-NADPHX. Catalyzes the epimerization of the S- and R-forms of NAD(P)HX, a damaged form of NAD(P)H that is a result of enzymatic or heat-dependent hydration. This is a prerequisite for the S-specific NAD(P)H-hydrate dehydratase to allow the repair of both epimers of NAD(P)HX. This Bordetella bronchiseptica (strain ATCC BAA-588 / NCTC 13252 / RB50) (Alcaligenes bronchisepticus) protein is NAD(P)H-hydrate epimerase.